A 547-amino-acid chain; its full sequence is Chaperonin GroEL (547 aa).

ATP is bound by residues 29–32, 86–90, glycine 413, 478–480, and aspartate 494; these read TLGP, DGTTT, and DVL.

Belongs to the chaperonin (HSP60) family. As to quaternary structure, forms a cylinder of 14 subunits composed of two heptameric rings stacked back-to-back. Interacts with the co-chaperonin GroES.

The protein resides in the cytoplasm. The catalysed reaction is ATP + H2O + a folded polypeptide = ADP + phosphate + an unfolded polypeptide.. Its function is as follows. Together with its co-chaperonin GroES, plays an essential role in assisting protein folding. The GroEL-GroES system forms a nano-cage that allows encapsulation of the non-native substrate proteins and provides a physical environment optimized to promote and accelerate protein folding. The polypeptide is Chaperonin GroEL (Alkaliphilus metalliredigens (strain QYMF)).